Here is a 766-residue protein sequence, read N- to C-terminus: 5-methyltetrahydropteroyltriglutamate--homocysteine methyltransferase 1 (766 aa).

Residues K18 and N116 each coordinate 5-methyltetrahydropteroyltri-L-glutamate. Residues 438–440 and E491 each bind L-homocysteine; that span reads IGS. L-methionine-binding positions include 438–440 and E491; that span reads IGS. Residues D496, Y519, 522 to 523, and W568 contribute to the 5-methyltetrahydropteroyltri-L-glutamate site; that span reads RC. L-homocysteine is bound at residue D606. D606 contacts L-methionine. Zn(2+)-binding residues include H648, C650, H659, and E672. H702 serves as the catalytic Proton donor. C734 lines the Zn(2+) pocket.

This sequence belongs to the vitamin-B12 independent methionine synthase family. It depends on Zn(2+) as a cofactor.

It is found in the cytoplasm. The protein localises to the cytosol. The catalysed reaction is 5-methyltetrahydropteroyltri-L-glutamate + L-homocysteine = tetrahydropteroyltri-L-glutamate + L-methionine. It participates in amino-acid biosynthesis; L-methionine biosynthesis via de novo pathway; L-methionine from L-homocysteine (MetE route): step 1/1. Catalyzes the transfer of a methyl group from 5-methyltetrahydrofolate to homocysteine resulting in methionine formation. This is 5-methyltetrahydropteroyltriglutamate--homocysteine methyltransferase 1 from Oryza sativa subsp. japonica (Rice).